We begin with the raw amino-acid sequence, 258 residues long: Enterotoxin type G (258 aa).

Residues 1 to 25 (MKKLSTVIIILILEIVFHNMNYVNA) form the signal peptide. Cysteines 116 and 133 form a disulfide.

Belongs to the staphylococcal/streptococcal toxin family.

Its subcellular location is the secreted. Functionally, staphylococcal enterotoxins cause the intoxication staphylococcal food poisoning syndrome. The illness is characterized by high fever, hypotension, diarrhea, shock, and in some cases death. The sequence is that of Enterotoxin type G (entG) from Staphylococcus aureus (strain N315).